Here is a 202-residue protein sequence, read N- to C-terminus: Na(+)-translocating NADH-quinone reductase subunit E (202 aa).

6 helical membrane passes run 11–31, 35–55, 79–99, 114–134, 144–164, and 180–200; these read SVFI…FLAV, VTTA…SVPA, LSFL…QILE, GIFL…AFMV, LVFG…LAAV, and LGIT…FSGV.

Belongs to the NqrDE/RnfAE family. Composed of six subunits; NqrA, NqrB, NqrC, NqrD, NqrE and NqrF.

The protein resides in the cell inner membrane. The catalysed reaction is a ubiquinone + n Na(+)(in) + NADH + H(+) = a ubiquinol + n Na(+)(out) + NAD(+). NQR complex catalyzes the reduction of ubiquinone-1 to ubiquinol by two successive reactions, coupled with the transport of Na(+) ions from the cytoplasm to the periplasm. NqrA to NqrE are probably involved in the second step, the conversion of ubisemiquinone to ubiquinol. The chain is Na(+)-translocating NADH-quinone reductase subunit E from Shewanella denitrificans (strain OS217 / ATCC BAA-1090 / DSM 15013).